The sequence spans 279 residues: Large ribosomal subunit protein uL2 (279 aa).

The segment at 223 to 279 is disordered; that stretch reads VVMNPVDHPHGGGEGRTSGGRHPVTPWGKPTKGKRTRSNKKTDSLIMRSRHLAKKKR. The segment covering 270-279 has biased composition (basic residues); it reads RSRHLAKKKR.

Belongs to the universal ribosomal protein uL2 family. In terms of assembly, part of the 50S ribosomal subunit. Forms a bridge to the 30S subunit in the 70S ribosome.

In terms of biological role, one of the primary rRNA binding proteins. Required for association of the 30S and 50S subunits to form the 70S ribosome, for tRNA binding and peptide bond formation. It has been suggested to have peptidyltransferase activity; this is somewhat controversial. Makes several contacts with the 16S rRNA in the 70S ribosome. The sequence is that of Large ribosomal subunit protein uL2 from Rhodospirillum rubrum (strain ATCC 11170 / ATH 1.1.1 / DSM 467 / LMG 4362 / NCIMB 8255 / S1).